Consider the following 480-residue polypeptide: 3-isopropylmalate dehydratase large subunit (480 aa).

The [4Fe-4S] cluster site is built by C360, C418, and C421.

The protein belongs to the aconitase/IPM isomerase family. LeuC type 1 subfamily. As to quaternary structure, heterodimer of LeuC and LeuD. The cofactor is [4Fe-4S] cluster.

The catalysed reaction is (2R,3S)-3-isopropylmalate = (2S)-2-isopropylmalate. The protein operates within amino-acid biosynthesis; L-leucine biosynthesis; L-leucine from 3-methyl-2-oxobutanoate: step 2/4. Its function is as follows. Catalyzes the isomerization between 2-isopropylmalate and 3-isopropylmalate, via the formation of 2-isopropylmaleate. This Anaeromyxobacter dehalogenans (strain 2CP-1 / ATCC BAA-258) protein is 3-isopropylmalate dehydratase large subunit.